Reading from the N-terminus, the 447-residue chain is Serine--tRNA ligase (447 aa).

Residue 245 to 247 (TAE) coordinates L-serine. ATP is bound by residues 276–278 (RKE) and valine 292. Glutamate 299 serves as a coordination point for L-serine. 363 to 366 (ELAS) serves as a coordination point for ATP. Threonine 398 contributes to the L-serine binding site.

It belongs to the class-II aminoacyl-tRNA synthetase family. Type-1 seryl-tRNA synthetase subfamily. Homodimer. The tRNA molecule binds across the dimer.

Its subcellular location is the cytoplasm. It catalyses the reaction tRNA(Ser) + L-serine + ATP = L-seryl-tRNA(Ser) + AMP + diphosphate + H(+). The catalysed reaction is tRNA(Sec) + L-serine + ATP = L-seryl-tRNA(Sec) + AMP + diphosphate + H(+). The protein operates within aminoacyl-tRNA biosynthesis; selenocysteinyl-tRNA(Sec) biosynthesis; L-seryl-tRNA(Sec) from L-serine and tRNA(Sec): step 1/1. Functionally, catalyzes the attachment of serine to tRNA(Ser). Is also able to aminoacylate tRNA(Sec) with serine, to form the misacylated tRNA L-seryl-tRNA(Sec), which will be further converted into selenocysteinyl-tRNA(Sec). This is Serine--tRNA ligase from Pyrobaculum neutrophilum (strain DSM 2338 / JCM 9278 / NBRC 100436 / V24Sta) (Thermoproteus neutrophilus).